We begin with the raw amino-acid sequence, 405 residues long: Mucosal addressin cell adhesion molecule 1 (405 aa).

The N-terminal stretch at 1–21 is a signal peptide; the sequence is MESILALLLALALVPYQLSRG. Ig-like domains follow at residues 22 to 109 and 110 to 227; these read QSFQ…ILVY and AFPD…TSPK. Over 22–364 the chain is Extracellular; the sequence is QSFQVNPPES…PGQVTPNSSS (343 aa). 3 disulfides stabilise this stretch: cysteine 45–cysteine 91, cysteine 49–cysteine 95, and cysteine 132–cysteine 200. Positions 221-257 are mucin-like; it reads QSQTSPKPPNTTSAEPYILTSSSTAEAVSTGLNITTL. Residues asparagine 230 and asparagine 253 are each glycosylated (N-linked (GlcNAc...) asparagine). A disordered region spans residues 255 to 275; sequence TTLPSAPPYPKLSPRTLSSEG. Positions 258 to 357 constitute an Ig-like 3 domain; sequence PSAPPYPKLS…EVTNLYVPGQ (100 aa). The cysteines at positions 293 and 341 are disulfide-linked. Asparagine 361 is a glycosylation site (N-linked (GlcNAc...) asparagine). The chain crosses the membrane as a helical span at residues 365 to 385; that stretch reads TVVLWIGSLVLGLLALVFLAY. Residues 386–405 lie on the Cytoplasmic side of the membrane; that stretch reads RLWKCYRPGPRPDTSSCTHL.

As to quaternary structure, homodimer. Post-translationally, O-glycosylated; contains syalic acid. The Ser/Thr-rich mucin-like domain may provide possible sites for O-glycosylation. As to expression, highly expressed on high endothelial venules (HEV) of organized intestinal lymphoid tissues like the Peyer patches and mesenteric lymph nodes, and in the lamina propria of the intestine. Some expression found in the spleen, and low levels of expression in the peripheral lymph nodes and the lactating mammary gland. No expression was detected in the liver, kidneys, lungs or in normal brain. Expressed as well in brain endothelioma cells, and mucosal tissues which are in a chronic state of inflammation, such as inflamed pancreas.

It is found in the membrane. Functionally, cell adhesion leukocyte receptor expressed by mucosal venules, helps to direct lymphocyte traffic into mucosal tissues including the Peyer patches and the intestinal lamina propria. It can bind both the integrin alpha-4/beta-7 and L-selectin, regulating both the passage and retention of leukocytes. Both isoform 1 and isoform 2 can adhere to integrin alpha-4/beta-7. Isoform 2, lacking the mucin-like domain, may be specialized in supporting integrin alpha-4/beta-7-dependent adhesion strengthening, independent of L-selectin binding. The protein is Mucosal addressin cell adhesion molecule 1 (Madcam1) of Mus musculus (Mouse).